Consider the following 66-residue polypeptide: Small ribosomal subunit protein bS21 (66 aa).

Belongs to the bacterial ribosomal protein bS21 family.

This chain is Small ribosomal subunit protein bS21, found in Rickettsia africae (strain ESF-5).